The following is a 107-amino-acid chain: Glutaredoxin 4 (107 aa).

The region spanning 4–106 (LDKIKKQISE…TLLAEVAAKH (103 aa)) is the Glutaredoxin domain. K21 provides a ligand contact to glutathione. C29 serves as a coordination point for [2Fe-2S] cluster. Glutathione-binding positions include R58, F70, and 83–84 (CD).

Belongs to the glutaredoxin family. Monothiol subfamily. As to quaternary structure, homodimer.

Its subcellular location is the cytoplasm. Monothiol glutaredoxin involved in the biogenesis of iron-sulfur clusters. The sequence is that of Glutaredoxin 4 (grxD) from Haemophilus influenzae (strain 86-028NP).